The following is a 324-amino-acid chain: Phosphate transport system permease protein PstC 2 (324 aa).

The next 6 membrane-spanning stretches (helical) occupy residues 30–50 (ASAA…FLLV), 90–110 (LSSI…AVFL), 125–145 (MVDL…IFVL), 174–194 (AGGG…LPIV), 237–257 (VAAS…VLVI), and 290–310 (PLPT…TFLV). An ABC transmembrane type-1 domain is found at 85-314 (FMVTALSSIT…VLTFLVNAAA (230 aa)).

This sequence belongs to the binding-protein-dependent transport system permease family. CysTW subfamily.

The protein localises to the cell membrane. Its function is as follows. Part of the binding-protein-dependent transport system for phosphate; probably responsible for the translocation of the substrate across the membrane. The protein is Phosphate transport system permease protein PstC 2 (pstC2) of Mycobacterium bovis (strain ATCC BAA-935 / AF2122/97).